Reading from the N-terminus, the 86-residue chain is Photosystem I reaction center subunit PsaK (86 aa).

Residues 15 to 34 (PWSTQVAMVMITCNLLAIVA) form a helical membrane-spanning segment.

The protein belongs to the PsaG/PsaK family.

The protein resides in the plastid. It localises to the chloroplast thylakoid membrane. This chain is Photosystem I reaction center subunit PsaK, found in Pyropia yezoensis (Susabi-nori).